A 163-amino-acid polypeptide reads, in one-letter code: Large ribosomal subunit protein bL17 (163 aa).

Residues 127 to 163 (KEVKKAKSRRGGKAKKAEGTAPEAPAAESESTTEASE) form a disordered region. The span at 128–140 (EVKKAKSRRGGKA) shows a compositional bias: basic residues. Low complexity predominate over residues 145-163 (GTAPEAPAAESESTTEASE).

Belongs to the bacterial ribosomal protein bL17 family. In terms of assembly, part of the 50S ribosomal subunit. Contacts protein L32.

The protein is Large ribosomal subunit protein bL17 of Flavobacterium johnsoniae (strain ATCC 17061 / DSM 2064 / JCM 8514 / BCRC 14874 / CCUG 350202 / NBRC 14942 / NCIMB 11054 / UW101) (Cytophaga johnsonae).